A 204-amino-acid chain; its full sequence is Protein-L-isoaspartate O-methyltransferase (204 aa).

It belongs to the methyltransferase superfamily. L-isoaspartyl/D-aspartyl protein methyltransferase family. As to quaternary structure, monomer.

Its subcellular location is the cytoplasm. The enzyme catalyses [protein]-L-isoaspartate + S-adenosyl-L-methionine = [protein]-L-isoaspartate alpha-methyl ester + S-adenosyl-L-homocysteine. In terms of biological role, catalyzes the methyl esterification of L-isoaspartyl residues in peptides and proteins that result from spontaneous decomposition of normal L-aspartyl and L-asparaginyl residues. It plays a role in the repair and/or degradation of damaged proteins. The chain is Protein-L-isoaspartate O-methyltransferase (pcm) from Rhizobium meliloti (strain 1021) (Ensifer meliloti).